Consider the following 66-residue polypeptide: M-poneratoxin-Dq3a (66 aa).

The N-terminal stretch at 1–23 is a signal peptide; that stretch reads MKLSALSIIFGMILVMTIMYTKA. Residues 24–43 constitute a propeptide that is removed on maturation; sequence EAEAEAEADADADAKAEAEA.

The protein belongs to the non-disulfide-bridged peptide (NDBP) superfamily. Medium-length antimicrobial peptide (group 3) family. Ponericin-W subfamily. In terms of tissue distribution, expressed by the venom gland.

It localises to the secreted. The protein localises to the target cell membrane. Functionally, may have antimicrobial properties by disrupting the integrity of the bacterial cell membrane. In addition, when tested in vitro on the parasite Trypanosoma cruzi (responsible of the Chagas disease), is able to potently reduce the number of the three forms (epimastigote, trypomastigote and amastigote) by inducing cell death through necrosis. May have antimicrobial properties by disrupting the integrity of the bacterial cell membrane. In addition, when tested in vitro on the parasite Trypanosoma cruzi (responsible of the Chagas disease), is able to moderately reduce the number of the forms epimastigote and trypomastigote. Its activity on the amastigote form has not been tested. In terms of biological role, may have antimicrobial properties by disrupting the integrity of the bacterial cell membrane. In addition, when tested in vitro on the parasite Trypanosoma cruzi (responsible of the Chagas disease), shows only a weak reduction of the number of the trypomastigote forms. Has no activity on the epimastigote forms. Its activity on the amastigote form has not been tested. This is M-poneratoxin-Dq3a from Dinoponera quadriceps (South American ant).